A 175-amino-acid polypeptide reads, in one-letter code: uncharacterized protein (175 aa).

Residues 35–56 (LIENSNYDNNNINNNNNNNNTD) show a composition bias toward low complexity. Residues 35–70 (LIENSNYDNNNINNNNNNNNTDNDNDNNNDNEPFYN) form a disordered region. A run of 2 helical transmembrane segments spans residues 106-126 (ILSF…FFNY) and 132-152 (YFII…KSIF).

The protein resides in the membrane. This is an uncharacterized protein from Dictyostelium discoideum (Social amoeba).